Consider the following 317-residue polypeptide: MAAAAAATEQQSSNGPVKKSMREKAVERRNVNKEHNSNFKAGYIPIDEDRLHKTGLRGRKGNLAICVIVLLFILAVINLIITLVIWAVIRIGPNGCDSMEFHESGLLRFKQVSDMGVIHPLYKSTVGGRRNENLVITGNNQPIVFQQGTTKLSVGKNKTSITSDTGMQFFDPRTQNILFSTDYETHEFHLPSGVKSLNVQKASTERITSNATSDLNIKVGGRAIVRGNEGVFIMGKTIQFHMGGNMELKAENSIILNGTVMVSTNRLPSSSSGDQFGGDDWVRYKLCMCADGTLFRVQVTGQNMGCQTSDNPCGDLY.

Residues 1–31 (MAAAAAATEQQSSNGPVKKSMREKAVERRNV) are disordered. Topologically, residues 1 to 64 (MAAAAAATEQ…GLRGRKGNLA (64 aa)) are cytoplasmic. Positions 20-31 (SMREKAVERRNV) are enriched in basic and acidic residues. Residues 65 to 85 (ICVIVLLFILAVINLIITLVI) form a helical; Signal-anchor for type II membrane protein membrane-spanning segment. Residues 86–317 (WAVIRIGPNG…TSDNPCGDLY (232 aa)) are Extracellular-facing. N-linked (GlcNAc...) asparagine glycosylation is found at N157, N210, and N257. Intrachain disulfides connect C287–C313 and C289–C306.

This sequence belongs to the sarcoglycan beta/delta/gamma/zeta family. In terms of assembly, cross-link to form 2 major subcomplexes: one consisting of SGCB, SGCD and SGCG and the other consisting of SGCB and SGCD. The association between SGCB and SGCG is particularly strong while SGCA is loosely associated with the other sarcoglycans. Disulfide bonds are present.

Its subcellular location is the cell membrane. The protein localises to the sarcolemma. It localises to the cytoplasm. The protein resides in the cytoskeleton. Component of the sarcoglycan complex, a subcomplex of the dystrophin-glycoprotein complex which forms a link between the F-actin cytoskeleton and the extracellular matrix. This chain is Beta-sarcoglycan (SGCB), found in Bos taurus (Bovine).